A 131-amino-acid polypeptide reads, in one-letter code: S-adenosylmethionine decarboxylase proenzyme (131 aa).

Catalysis depends on serine 64, which acts as the Schiff-base intermediate with substrate; via pyruvic acid. A Pyruvic acid (Ser); by autocatalysis modification is found at serine 64. Residue histidine 69 is the Proton acceptor; for processing activity of the active site. Cysteine 84 (proton donor; for catalytic activity) is an active-site residue.

The protein belongs to the prokaryotic AdoMetDC family. Type 1 subfamily. Heterotetramer of two alpha and two beta chains arranged as a dimer of alpha/beta heterodimers. Requires pyruvate as cofactor. In terms of processing, is synthesized initially as an inactive proenzyme. Formation of the active enzyme involves a self-maturation process in which the active site pyruvoyl group is generated from an internal serine residue via an autocatalytic post-translational modification. Two non-identical subunits are generated from the proenzyme in this reaction, and the pyruvate is formed at the N-terminus of the alpha chain, which is derived from the carboxyl end of the proenzyme. The post-translation cleavage follows an unusual pathway, termed non-hydrolytic serinolysis, in which the side chain hydroxyl group of the serine supplies its oxygen atom to form the C-terminus of the beta chain, while the remainder of the serine residue undergoes an oxidative deamination to produce ammonia and the pyruvoyl group blocking the N-terminus of the alpha chain.

The enzyme catalyses S-adenosyl-L-methionine + H(+) = S-adenosyl 3-(methylsulfanyl)propylamine + CO2. Its pathway is amine and polyamine biosynthesis; S-adenosylmethioninamine biosynthesis; S-adenosylmethioninamine from S-adenosyl-L-methionine: step 1/1. Catalyzes the decarboxylation of S-adenosylmethionine to S-adenosylmethioninamine (dcAdoMet), the propylamine donor required for the synthesis of the polyamines spermine and spermidine from the diamine putrescine. This chain is S-adenosylmethionine decarboxylase proenzyme, found in Thermoplasma acidophilum (strain ATCC 25905 / DSM 1728 / JCM 9062 / NBRC 15155 / AMRC-C165).